Here is a 290-residue protein sequence, read N- to C-terminus: Metallo-beta-lactamase L1 type 3 (290 aa).

Residues 1 to 21 (MRSTLLAFALAVALPAAHTSA) form the signal peptide. Positions 22–33 (AEVPLPQLRAYT) are excised as a propeptide. Zn(2+) is bound by residues His105, His107, Asp109, His110, and His181. Substrate is bound at residue Asp205. Residues Cys239 and Cys267 are joined by a disulfide bond. Residue His246 coordinates Zn(2+).

This sequence belongs to the metallo-beta-lactamase superfamily. Class-B beta-lactamase family. Homotetramer. The cofactor is Zn(2+).

Its subcellular location is the periplasm. It carries out the reaction a beta-lactam + H2O = a substituted beta-amino acid. With respect to regulation, inhibited by Hg(2+) or Cu(2+), and by chelating agents such as EDTA and O-phenanthroline. Reduced enzymatic activity in presence of cobalt, nickel, cadmium, and manganese. Confers resistance to the different beta-lactams antibiotics (penicillin, cephalosporin and carbapenem) via the hydrolysis of the beta-lactam ring. The protein is Metallo-beta-lactamase L1 type 3 of Stenotrophomonas maltophilia (Pseudomonas maltophilia).